A 564-amino-acid chain; its full sequence is MGLQACLLGLFALILSGKCSYSPEPDQRRTLPPGWVSLGRADPEEELSLTFALRQQNVERLSELVQAVSDPSSPQYGKYLTLENVADLVRPSPLTLHTVQKWLLAAGAQKCHSVITQDFLTCWLSIRQAELLLPGAEFHHYVGGPTETHVVRSPHPYQLPQALAPHVDFVGGLHRFPPTSSLRQHPEPQVTGTVGLHLGVTPSVIRKRYNLTSQDVGSGTSNNSQACAQFLEQYFHDSDLAQFMRLFGGNFAHQASVARVVGQQGRGRAGIEASLDVQYLMSAGANISTWVYSSPGRHEGQEPFLQWLMLLSNESALPHVHTVSYGDEEDSLSSAYIQRVNTELMKAAARGLTLLFASGDSGAGCWSVSGRHQFRPTFPASSPYVTTVGGTSFLEPFLTTNEIVDYISGGGFSNVFPRPSYQEEAVTKFLSSSPHLPPSSYFNASGRAYPDVAALSDGYWVVSNRVPIPWVSGTSASTPVFGGGILSLINEHRILSGRPPLGFLNPRLYQQHGAGLFDVTHGCHESCLDEEVEGQGFCSGPGWDPVTGWGTPNFPALPKTLLNP.

An N-terminal signal peptide occupies residues 1–19 (MGLQACLLGLFALILSGKC). Residues 20-195 (SYSPEPDQRR…PEPQVTGTVG (176 aa)) constitute a propeptide, removed in mature form. A disulfide bond links cysteine 111 and cysteine 122. Positions 199–564 (GVTPSVIRKR…PALPKTLLNP (366 aa)) constitute a Peptidase S53 domain. Asparagine 210 and asparagine 222 each carry an N-linked (GlcNAc...) asparagine glycan. Active-site charge relay system residues include glutamate 272 and aspartate 276. Asparagine 286, asparagine 313, and asparagine 443 each carry an N-linked (GlcNAc...) asparagine glycan. 2 disulfides stabilise this stretch: cysteine 365–cysteine 527 and cysteine 523–cysteine 538. Serine 475 functions as the Charge relay system in the catalytic mechanism. Positions 518 and 519 each coordinate Ca(2+). Residues glycine 540, glycine 542, and aspartate 544 each contribute to the Ca(2+) site.

Monomer. Interacts with CLN5. Interacts with CLN3. Ca(2+) serves as cofactor. Post-translationally, activated by autocatalytic proteolytical processing upon acidification. N-glycosylation is required for processing and activity.

Its subcellular location is the lysosome. It is found in the melanosome. The catalysed reaction is Release of an N-terminal tripeptide from a polypeptide, but also has endopeptidase activity.. In terms of biological role, lysosomal serine protease with tripeptidyl-peptidase I activity. May act as a non-specific lysosomal peptidase which generates tripeptides from the breakdown products produced by lysosomal proteinases. Requires substrates with an unsubstituted N-terminus. The polypeptide is Tripeptidyl-peptidase 1 (TPP1) (Pongo abelii (Sumatran orangutan)).